Here is a 366-residue protein sequence, read N- to C-terminus: Carbamoyl phosphate synthase small chain (366 aa).

The tract at residues 1–174 is CPSase; the sequence is MQEIPAILVL…GERYTVDNPD (174 aa). L-glutamine contacts are provided by Ser48, Gly226, and Gly228. Residues 178–366 form the Glutamine amidotransferase type-1 domain; it reads HVVAFDYGIK…FTELMERLKN (189 aa). Cys256 functions as the Nucleophile in the catalytic mechanism. L-glutamine contacts are provided by Leu257, Gln260, Asn298, Gly300, and Phe301. Residues His340 and Glu342 contribute to the active site.

This sequence belongs to the CarA family. Composed of two chains; the small (or glutamine) chain promotes the hydrolysis of glutamine to ammonia, which is used by the large (or ammonia) chain to synthesize carbamoyl phosphate. Tetramer of heterodimers (alpha,beta)4.

It catalyses the reaction hydrogencarbonate + L-glutamine + 2 ATP + H2O = carbamoyl phosphate + L-glutamate + 2 ADP + phosphate + 2 H(+). The catalysed reaction is L-glutamine + H2O = L-glutamate + NH4(+). Its pathway is amino-acid biosynthesis; L-arginine biosynthesis; carbamoyl phosphate from bicarbonate: step 1/1. The protein operates within pyrimidine metabolism; UMP biosynthesis via de novo pathway; (S)-dihydroorotate from bicarbonate: step 1/3. Small subunit of the glutamine-dependent carbamoyl phosphate synthetase (CPSase). CPSase catalyzes the formation of carbamoyl phosphate from the ammonia moiety of glutamine, carbonate, and phosphate donated by ATP, constituting the first step of 2 biosynthetic pathways, one leading to arginine and/or urea and the other to pyrimidine nucleotides. The small subunit (glutamine amidotransferase) binds and cleaves glutamine to supply the large subunit with the substrate ammonia. The protein is Carbamoyl phosphate synthase small chain of Chlorobaculum tepidum (strain ATCC 49652 / DSM 12025 / NBRC 103806 / TLS) (Chlorobium tepidum).